The sequence spans 1048 residues: Self-sufficient cytochrome P450 monooxygenase CYP505E4 (1048 aa).

Cysteine 405 contributes to the heme binding site. The region spanning 499–640 (VSFFYGSNSG…DLEVWEETNL (142 aa)) is the Flavodoxin-like domain. Residues 505–509 (SNSGT) and 584–616 (VFGC…TRLA) contribute to the FMN site. Residues 678 to 906 (RDLIEAKVTA…RPAKDAFHLP (229 aa)) form the FAD-binding FR-type domain.

It in the N-terminal section; belongs to the cytochrome P450 family. The cofactor is FAD. It depends on FMN as a cofactor. Heme serves as cofactor.

It catalyses the reaction 2 oxidized [cytochrome P450] + NADPH = 2 reduced [cytochrome P450] + NADP(+) + H(+). The catalysed reaction is an organic molecule + reduced [NADPH--hemoprotein reductase] + O2 = an alcohol + oxidized [NADPH--hemoprotein reductase] + H2O + H(+). The enzyme catalyses dodecanoate + reduced [NADPH--hemoprotein reductase] + O2 = 5-hydroxydodecanoate + oxidized [NADPH--hemoprotein reductase] + H2O + H(+). It carries out the reaction tetradecanoate + reduced [NADPH--hemoprotein reductase] + O2 = 7-hydroxytetradecanoate + oxidized [NADPH--hemoprotein reductase] + H2O + H(+). It catalyses the reaction dodecan-1-ol + reduced [NADPH--hemoprotein reductase] + O2 = 1,5-dodecanediol + oxidized [NADPH--hemoprotein reductase] + H2O + H(+). The catalysed reaction is dodecan-1-ol + reduced [NADPH--hemoprotein reductase] + O2 = 1,4-dodecanediol + oxidized [NADPH--hemoprotein reductase] + H2O + H(+). The enzyme catalyses dodecan-1-ol + reduced [NADPH--hemoprotein reductase] + O2 = 1,6-dodecanediol + oxidized [NADPH--hemoprotein reductase] + H2O + H(+). Self-sufficient cytochrome P450 monooxygenase that catalyzes the regioselective in-chain hydroxylation of alkanes, fatty alcohols, and fatty acids at the omega-7 position. Performs hydroxylation of C10-C16 n-alkanes and C12 and C14 fatty alcohols; and thereby enables the one step biocatalytic synthesis of rare alcohols such as 5-dodecanol and 7-tetradecanol. Converts 1-dodecanol into 1,5-dodecanediol as major product with very little sub-terminally hydroxylated products with the 1,4-dodecanediol and 1,6-dodecanediol more abundant. Converts dodecanoic acid to 5-hydroxydodecanoic acid which can be further converted into delta-dodecalactone by lactonization of the 5-hydroxy acid at low pH. Also gives sub-terminal hydroxylation of dodecanoic acid with 9-hydroxydodecanoic acid being the second most abundant product. The polypeptide is Self-sufficient cytochrome P450 monooxygenase CYP505E4 (Penicillium expansum (Blue mold rot fungus)).